A 106-amino-acid chain; its full sequence is Large ribosomal subunit protein uL24 (106 aa).

Belongs to the universal ribosomal protein uL24 family. Part of the 50S ribosomal subunit.

Functionally, one of two assembly initiator proteins, it binds directly to the 5'-end of the 23S rRNA, where it nucleates assembly of the 50S subunit. One of the proteins that surrounds the polypeptide exit tunnel on the outside of the subunit. The sequence is that of Large ribosomal subunit protein uL24 from Thermosipho africanus (strain TCF52B).